Consider the following 843-residue polypeptide: Molybdenum cofactor sulfurase (843 aa).

N6-(pyridoxal phosphate)lysine is present on Lys-241. Cys-405 is a catalytic residue. Residues 657 to 836 (QYLRKFVMPG…LMVGDIVIPS (180 aa)) form the MOSC domain.

This sequence belongs to the class-V pyridoxal-phosphate-dependent aminotransferase family. MOCOS subfamily. Pyridoxal 5'-phosphate serves as cofactor.

It carries out the reaction Mo-molybdopterin + L-cysteine + AH2 = thio-Mo-molybdopterin + L-alanine + A + H2O. In terms of biological role, sulfurates the molybdenum cofactor. Sulfation of molybdenum is essential for xanthine dehydrogenase (XDH) and aldehyde oxidase (ADO) enzymes in which molybdenum cofactor is liganded by 1 oxygen and 1 sulfur atom in active form. The sequence is that of Molybdenum cofactor sulfurase from Aspergillus fumigatus (strain CBS 144.89 / FGSC A1163 / CEA10) (Neosartorya fumigata).